The primary structure comprises 352 residues: Small ribosomal subunit biogenesis GTPase RsgA (352 aa).

Basic residues predominate over residues 1–11 (MTKRKLSKGQQ). The segment at 1–35 (MTKRKLSKGQQRRVQENHKKRLQSKEKKNHVELDD) is disordered. The segment covering 13–33 (RVQENHKKRLQSKEKKNHVEL) has biased composition (basic and acidic residues). Positions 114–276 (YYDGIKPIAA…VIDSPGVREF (163 aa)) constitute a CP-type G domain. Residues 162-165 (NKVD) and 216-224 (GQSGVGKSS) each bind GTP. 4 residues coordinate Zn(2+): C300, C305, H307, and C313.

This sequence belongs to the TRAFAC class YlqF/YawG GTPase family. RsgA subfamily. In terms of assembly, monomer. Associates with 30S ribosomal subunit, binds 16S rRNA. The cofactor is Zn(2+).

It localises to the cytoplasm. In terms of biological role, one of several proteins that assist in the late maturation steps of the functional core of the 30S ribosomal subunit. Helps release RbfA from mature subunits. May play a role in the assembly of ribosomal proteins into the subunit. Circularly permuted GTPase that catalyzes slow GTP hydrolysis, GTPase activity is stimulated by the 30S ribosomal subunit. In Proteus mirabilis (strain HI4320), this protein is Small ribosomal subunit biogenesis GTPase RsgA.